Reading from the N-terminus, the 384-residue chain is BarH-like 2 homeobox protein (384 aa).

Disordered stretches follow at residues 1-134, 154-237, and 364-384; these read MTAM…APRT, CAPY…TAFS, and PGGQPALNPLSNPIPGTPHPR. Residues 119–134 show a composition bias toward low complexity; it reads QSAAQQLGSAAAAPRT. Positions 177–217 are enriched in basic and acidic residues; it reads ESFRPKLEQEDSKTKLDKREDSQSDIKCHGTKEEGDREITS. A DNA-binding region (homeobox) is located at residues 229–288; the sequence is PRKARTAFSDHQLNQLERSFERQKYLSVQDRMDLAAALNLTDTQVKTWYQNRRTKWKRQT.

This sequence belongs to the BAR homeobox family. As to expression, expressed in the ganglion cell layer of the retina in the eye and in the ventral zone of the dorsal thalamus of the CNS.

Its subcellular location is the nucleus. Functionally, potential regulator of neural basic helix-loop-helix genes. It may down-regulate expression of ASCL1 and, within the thalamus, up-regulate NGN2, thereby regulating distinct patterns of neuronal differentiation. This chain is BarH-like 2 homeobox protein (Barhl2), found in Rattus norvegicus (Rat).